The sequence spans 527 residues: Arginine--tRNA ligase (527 aa).

The 'HIGH' region signature appears at 112-122 (ANPTGPLHIGH).

The protein belongs to the class-I aminoacyl-tRNA synthetase family. Monomer.

The protein localises to the cytoplasm. It carries out the reaction tRNA(Arg) + L-arginine + ATP = L-arginyl-tRNA(Arg) + AMP + diphosphate. This chain is Arginine--tRNA ligase, found in Nitratiruptor sp. (strain SB155-2).